We begin with the raw amino-acid sequence, 179 residues long: Large ribosomal subunit protein uL6 (179 aa).

Belongs to the universal ribosomal protein uL6 family. Part of the 50S ribosomal subunit.

In terms of biological role, this protein binds to the 23S rRNA, and is important in its secondary structure. It is located near the subunit interface in the base of the L7/L12 stalk, and near the tRNA binding site of the peptidyltransferase center. The protein is Large ribosomal subunit protein uL6 of Rhodococcus jostii (strain RHA1).